The primary structure comprises 1064 residues: Carbamoyl phosphate synthase large chain (1064 aa).

Positions 1–401 are carboxyphosphate synthetic domain; the sequence is MPKRNDIKKI…SLLKAVRSLE (401 aa). Residues Arg-129, Arg-169, Gly-175, Gly-176, Glu-208, Ile-210, Glu-215, Gly-241, Val-242, His-243, Gln-284, and Glu-298 each coordinate ATP. The ATP-grasp 1 domain maps to 133 to 327; sequence KELCERIGEP…IAKMSAKIAI (195 aa). Mg(2+) is bound by residues Gln-284, Glu-298, and Asn-300. Gln-284, Glu-298, and Asn-300 together coordinate Mn(2+). The interval 402 to 546 is oligomerization domain; that stretch reads IGVFHNDLQE…YSTYEWENES (145 aa). The segment at 547–929 is carbamoyl phosphate synthetic domain; sequence KRSSKEKIIV…ALYKSFEAAK (383 aa). Positions 671–861 constitute an ATP-grasp 2 domain; sequence EKALQDLEIP…MAQLATQMIL (191 aa). Positions 707, 746, 748, 752, 777, 778, 779, 780, 820, and 832 each coordinate ATP. Mg(2+) is bound by residues Gln-820, Glu-832, and Asn-834. The Mn(2+) site is built by Gln-820, Glu-832, and Asn-834. The MGS-like domain maps to 930 to 1064; that stretch reads LHMADYGSVL…QSRSFTTKNI (135 aa). Residues 930 to 1064 are allosteric domain; sequence LHMADYGSVL…QSRSFTTKNI (135 aa).

This sequence belongs to the CarB family. As to quaternary structure, composed of two chains; the small (or glutamine) chain promotes the hydrolysis of glutamine to ammonia, which is used by the large (or ammonia) chain to synthesize carbamoyl phosphate. Tetramer of heterodimers (alpha,beta)4. Mg(2+) is required as a cofactor. Mn(2+) serves as cofactor.

The enzyme catalyses hydrogencarbonate + L-glutamine + 2 ATP + H2O = carbamoyl phosphate + L-glutamate + 2 ADP + phosphate + 2 H(+). It catalyses the reaction hydrogencarbonate + NH4(+) + 2 ATP = carbamoyl phosphate + 2 ADP + phosphate + 2 H(+). It participates in amino-acid biosynthesis; L-arginine biosynthesis; carbamoyl phosphate from bicarbonate: step 1/1. It functions in the pathway pyrimidine metabolism; UMP biosynthesis via de novo pathway; (S)-dihydroorotate from bicarbonate: step 1/3. Large subunit of the glutamine-dependent carbamoyl phosphate synthetase (CPSase). CPSase catalyzes the formation of carbamoyl phosphate from the ammonia moiety of glutamine, carbonate, and phosphate donated by ATP, constituting the first step of 2 biosynthetic pathways, one leading to arginine and/or urea and the other to pyrimidine nucleotides. The large subunit (synthetase) binds the substrates ammonia (free or transferred from glutamine from the small subunit), hydrogencarbonate and ATP and carries out an ATP-coupled ligase reaction, activating hydrogencarbonate by forming carboxy phosphate which reacts with ammonia to form carbamoyl phosphate. In Lactococcus lactis subsp. lactis (strain IL1403) (Streptococcus lactis), this protein is Carbamoyl phosphate synthase large chain.